The primary structure comprises 205 residues: Ras-related protein RABD1 (205 aa).

N-acetylserine is present on Ser-2. GTP-binding positions include Gly-15–Cys-23, Tyr-33–Thr-40, Asp-63–Gln-67, Asn-121–Asp-124, and Ser-151–Lys-153. The Effector region motif lies at Tyr-37–Phe-45. Composition is skewed to polar residues over residues Gly-174–Gly-186 and Pro-194–Gln-205. Residues Gly-174–Gln-205 form a disordered region. S-geranylgeranyl cysteine attachment occurs at residues Cys-202 and Cys-203.

It belongs to the small GTPase superfamily. Rab family. Does not interact with GC5. Interacts with XI-2/MYA2.

The protein localises to the golgi apparatus. It is found in the trans-Golgi network membrane. The protein resides in the golgi apparatus membrane. Its function is as follows. Protein transport. Regulator of membrane traffic from the Golgi apparatus towards the endoplasmic reticulum (ER). The protein is Ras-related protein RABD1 (RABD1) of Arabidopsis thaliana (Mouse-ear cress).